Reading from the N-terminus, the 74-residue chain is Exodeoxyribonuclease 7 small subunit (74 aa).

Belongs to the XseB family. Heterooligomer composed of large and small subunits.

The protein localises to the cytoplasm. The catalysed reaction is Exonucleolytic cleavage in either 5'- to 3'- or 3'- to 5'-direction to yield nucleoside 5'-phosphates.. Bidirectionally degrades single-stranded DNA into large acid-insoluble oligonucleotides, which are then degraded further into small acid-soluble oligonucleotides. In Bdellovibrio bacteriovorus (strain ATCC 15356 / DSM 50701 / NCIMB 9529 / HD100), this protein is Exodeoxyribonuclease 7 small subunit.